Consider the following 123-residue polypeptide: Large ribosomal subunit protein uL24 (123 aa).

It belongs to the universal ribosomal protein uL24 family. Part of the 50S ribosomal subunit.

In terms of biological role, one of two assembly initiator proteins, it binds directly to the 5'-end of the 23S rRNA, where it nucleates assembly of the 50S subunit. One of the proteins that surrounds the polypeptide exit tunnel on the outside of the subunit. The polypeptide is Large ribosomal subunit protein uL24 (Kineococcus radiotolerans (strain ATCC BAA-149 / DSM 14245 / SRS30216)).